A 347-amino-acid chain; its full sequence is NADH-quinone oxidoreductase subunit H (347 aa).

9 helical membrane-spanning segments follow: residues 13 to 33 (LLIL…VAYI), 50 to 70 (PNVV…KFVF), 82 to 102 (GVFL…WAVI), 115 to 135 (VGIL…IMAG), 161 to 181 (IGFV…TDIV), 198 to 218 (FLDW…ISAL), 248 to 268 (FLLF…LTTI), 286 to 306 (VPGV…FALV), and 321 to 341 (LGWK…AAFL).

This sequence belongs to the complex I subunit 1 family. As to quaternary structure, NDH-1 is composed of 14 different subunits. Subunits NuoA, H, J, K, L, M, N constitute the membrane sector of the complex.

The protein localises to the cell inner membrane. It carries out the reaction a quinone + NADH + 5 H(+)(in) = a quinol + NAD(+) + 4 H(+)(out). Its function is as follows. NDH-1 shuttles electrons from NADH, via FMN and iron-sulfur (Fe-S) centers, to quinones in the respiratory chain. The immediate electron acceptor for the enzyme in this species is believed to be ubiquinone. Couples the redox reaction to proton translocation (for every two electrons transferred, four hydrogen ions are translocated across the cytoplasmic membrane), and thus conserves the redox energy in a proton gradient. This subunit may bind ubiquinone. The protein is NADH-quinone oxidoreductase subunit H of Chelativorans sp. (strain BNC1).